Consider the following 91-residue polypeptide: Small ribosomal subunit protein uS15c (91 aa).

This sequence belongs to the universal ribosomal protein uS15 family. Part of the 30S ribosomal subunit.

Its subcellular location is the plastid. The protein resides in the chloroplast. The polypeptide is Small ribosomal subunit protein uS15c (rps15) (Adiantum capillus-veneris (Maidenhair fern)).